We begin with the raw amino-acid sequence, 512 residues long: Mucin-13 (512 aa).

The first 18 residues, 1–18 (MKAIIHLTLLALLSVNTA), serve as a signal peptide directing secretion. The Extracellular segment spans residues 19-421 (TNQGNSADAV…GLDCKDKFQL (403 aa)). Residues 22–38 (GNSADAVTTTETATSGP) show a composition bias toward polar residues. 2 disordered regions span residues 22-67 (GNSA…PTAT) and 133-176 (MVPS…PSNP). Residues 53 to 67 (TASTTANTPSFPTAT) are compositionally biased toward low complexity. Positions 135-176 (PSETQSNNEMSPTTEDNQSSGPPTGTALLETSTLNSTGPSNP) are enriched in polar residues. 2 N-linked (GlcNAc...) asparagine glycosylation sites follow: Asn151 and Asn169. One can recognise an EGF-like 1 domain in the interval 173–211 (PSNPCQDDPCADNSLCVKLHNTSFCLCLEGYYYNSSTCK). 3 cysteine pairs are disulfide-bonded: Cys177–Cys188, Cys182–Cys197, and Cys199–Cys210. Residues Asn193, Asn206, Asn284, and Asn332 are each glycosylated (N-linked (GlcNAc...) asparagine). The SEA domain occupies 212-336 (KGKVFPGKIS…DYYGCNQTAD (125 aa)). 2 consecutive EGF-like domains span residues 322–361 (LTLR…PFCV) and 363–404 (SSLK…GNCQ). Intrachain disulfides connect Cys326–Cys338, Cys331–Cys344, Cys346–Cys360, Cys367–Cys378, Cys371–Cys389, and Cys391–Cys403. A helical transmembrane segment spans residues 422–442 (ILTIVGTIAGIVILSMIIALI). The Cytoplasmic portion of the chain corresponds to 443 to 512 (VTARSNNKTK…RHSSMPRPDY (70 aa)). Over residues 493-505 (RDSQMQNPYSRHS) the composition is skewed to polar residues. The tract at residues 493-512 (RDSQMQNPYSRHSSMPRPDY) is disordered.

Homodimer of beta subunits. Post-translationally, cleaved into two subunits, alpha and beta, probably between the first EGF domain and the SEA domain. Beta subunit contains the cytoplasmic tail and alpha subunit the extracellular tail. The homooligomerization into dimers is dependent on intrachain disulfide bonds. Highly N-glycosylated. As to expression, highly expressed in epithelial tissues, particularly those of the gastrointestinal and respiratory tracts, such as large intestine and trachea, followed by kidney, small intestine, appendix and stomach.

Its subcellular location is the cell membrane. It is found in the apical cell membrane. The protein resides in the secreted. Epithelial and hemopoietic transmembrane mucin that may play a role in cell signaling. In Homo sapiens (Human), this protein is Mucin-13 (MUC13).